We begin with the raw amino-acid sequence, 259 residues long: uncharacterized protein (259 aa).

6 helical membrane passes run 9 to 31 (ILSV…LESL), 84 to 106 (LLGG…LQWF), 126 to 148 (FLIY…FVFG), 153 to 175 (SIVA…LEYV), 196 to 215 (HFIL…YIAA), and 230 to 252 (TFRA…SWLG).

The protein localises to the cell membrane. This is an uncharacterized protein from Archaeoglobus fulgidus (strain ATCC 49558 / DSM 4304 / JCM 9628 / NBRC 100126 / VC-16).